The sequence spans 543 residues: Limonene hydroxylase (543 aa).

A Sigma-54 factor interaction domain is found at 232–464; that stretch reads VVTYNPSFEK…LRNVIERAFL (233 aa). Residues 260 to 267 and 324 to 333 contribute to the ATP site; these read GETGSGKE and ADGGTLFLDE.

It carries out the reaction (4S)-limonene + reduced [NADPH--hemoprotein reductase] + O2 = (1S,5R)-carveol + oxidized [NADPH--hemoprotein reductase] + H2O + H(+). The enzyme catalyses (4S)-limonene + reduced [NADPH--hemoprotein reductase] + O2 = (4S)-perillyl alcohol + oxidized [NADPH--hemoprotein reductase] + H2O + H(+). The catalysed reaction is perillyl alcohol + NAD(+) = perillyl aldehyde + NADH + H(+). It catalyses the reaction (1S,5R)-carveol + NADP(+) = (R)-carvone + NADPH + H(+). Functionally, involved in limonene hydroxylation to a mixture of carveol and perillyl alcohol as well as in dehydrogenation of these products to carvone and perillyl aldehyde. Aromatic alcohols containing an isopropyl or isopropenyl group at ring position 4 also served as substrates for the dehydrogenase activity. This is Limonene hydroxylase from Geobacillus stearothermophilus (Bacillus stearothermophilus).